Consider the following 348-residue polypeptide: Mitogen-activated protein kinase 14B (348 aa).

A Protein kinase domain is found at 25 to 309; it reads YQNLSPVGSG…ASQALAHPYF (285 aa). ATP-binding positions include 31–39 and K54; that span reads VGSGAYGSV. D169 acts as the Proton acceptor in catalysis. T181 is modified (phosphothreonine; by MAP2K3). The short motif at 181–183 is the TXY element; the sequence is TGY. A Phosphotyrosine; by MAP2K3 modification is found at Y183.

It belongs to the protein kinase superfamily. CMGC Ser/Thr protein kinase family. MAP kinase subfamily. It depends on Mg(2+) as a cofactor. Post-translationally, dually phosphorylated on Thr-181 and Tyr-183, which activates the enzyme.

It localises to the cytoplasm. Its subcellular location is the nucleus. The enzyme catalyses L-seryl-[protein] + ATP = O-phospho-L-seryl-[protein] + ADP + H(+). It carries out the reaction L-threonyl-[protein] + ATP = O-phospho-L-threonyl-[protein] + ADP + H(+). Activated by threonine and tyrosine phosphorylation by the dual specificity kinase, MKK3. In terms of biological role, serine/threonine kinase which acts as an essential component of the MAP kinase signal transduction pathway. Mapk14b is one of the four p38 MAPKs which play an important role in the cascades of cellular responses evoked by extracellular stimuli such as pro-inflammatory cytokines or physical stress leading to direct activation of transcription factors. Accordingly, p38 MAPKs phosphorylate a broad range of proteins and it has been estimated that they may have approximately 200 to 300 substrates each. Some of the targets are downstream kinases which are activated through phosphorylation and further phosphorylate additional targets. This chain is Mitogen-activated protein kinase 14B (mapk14b), found in Danio rerio (Zebrafish).